The chain runs to 359 residues: Protein mab-21-like 2 (359 aa).

It belongs to the mab-21 family.

It localises to the nucleus. The protein resides in the cytoplasm. Functionally, required for eye morphogenesis. May promote the survival of proliferating retinal progenitor cells. This chain is Protein mab-21-like 2 (mab21l2), found in Danio rerio (Zebrafish).